We begin with the raw amino-acid sequence, 323 residues long: Caspase-1 (323 aa).

Positions 1–33 (MTDECVTRNYGVGIRSPNGSENRGSFIMADNTD) are excised as a propeptide. Catalysis depends on residues histidine 154 and cysteine 196. The propeptide occupies 203–215 (GGITLEKGVTETD).

This sequence belongs to the peptidase C14A family. In terms of assembly, heterotetramer that consists of two anti-parallel arranged heterodimers, each one formed by a 22 kDa (p22) and a 13 kDa (p13) subunit.

In terms of biological role, involved in the activation cascade of caspases responsible for apoptosis execution. Proteolytically cleaves poly(ADP-ribose) polymerase (PARP). Loss of zygotic DCP-1 function causes larval lethality and melanotic tumors. The protein is Caspase-1 (Dcp-1) of Drosophila melanogaster (Fruit fly).